Reading from the N-terminus, the 662-residue chain is Translation factor guf1, mitochondrial (662 aa).

The N-terminal 42 residues, 1–42 (MRGCLQLARWLSAAPNWPASSLLKAPGSSFATRLFTTTSSYK), are a transit peptide targeting the mitochondrion. Positions 64-244 (ERYRNFCIVA…TVVEKIPAPI (181 aa)) constitute a tr-type G domain. GTP-binding positions include 73 to 80 (AHVDHGKS), 137 to 141 (DTPGH), and 191 to 194 (NKVD).

Belongs to the TRAFAC class translation factor GTPase superfamily. Classic translation factor GTPase family. LepA subfamily.

It localises to the mitochondrion inner membrane. The enzyme catalyses GTP + H2O = GDP + phosphate + H(+). In terms of biological role, promotes mitochondrial protein synthesis. May act as a fidelity factor of the translation reaction, by catalyzing a one-codon backward translocation of tRNAs on improperly translocated ribosomes. Binds to mitochondrial ribosomes in a GTP-dependent manner. The polypeptide is Translation factor guf1, mitochondrial (guf1) (Emericella nidulans (strain FGSC A4 / ATCC 38163 / CBS 112.46 / NRRL 194 / M139) (Aspergillus nidulans)).